The sequence spans 125 residues: Small ribosomal subunit protein uS13 (125 aa).

The protein belongs to the universal ribosomal protein uS13 family. Part of the 30S ribosomal subunit. Forms a loose heterodimer with protein S19. Forms two bridges to the 50S subunit in the 70S ribosome.

Its function is as follows. Located at the top of the head of the 30S subunit, it contacts several helices of the 16S rRNA. In the 70S ribosome it contacts the 23S rRNA (bridge B1a) and protein L5 of the 50S subunit (bridge B1b), connecting the 2 subunits; these bridges are implicated in subunit movement. Contacts the tRNAs in the A and P-sites. This Rickettsia bellii (strain OSU 85-389) protein is Small ribosomal subunit protein uS13.